The primary structure comprises 37 residues: Cytochrome b6-f complex subunit 5 (37 aa).

Residues 5-25 (LLCGIVLGLVPVTIAGLFVTA) traverse the membrane as a helical segment.

Belongs to the PetG family. As to quaternary structure, the 4 large subunits of the cytochrome b6-f complex are cytochrome b6, subunit IV (17 kDa polypeptide, PetD), cytochrome f and the Rieske protein, while the 4 small subunits are PetG, PetL, PetM and PetN. The complex functions as a dimer.

The protein localises to the plastid. It localises to the chloroplast thylakoid membrane. Component of the cytochrome b6-f complex, which mediates electron transfer between photosystem II (PSII) and photosystem I (PSI), cyclic electron flow around PSI, and state transitions. PetG is required for either the stability or assembly of the cytochrome b6-f complex. This Chlamydomonas reinhardtii (Chlamydomonas smithii) protein is Cytochrome b6-f complex subunit 5.